We begin with the raw amino-acid sequence, 899 residues long: Bifunctional uridylyltransferase/uridylyl-removing enzyme (899 aa).

Residues Met1 to Pro342 form a uridylyltransferase region. The tract at residues Leu343 to Thr705 is uridylyl-removing. In terms of domain architecture, HD spans Val461–Leu583. 2 consecutive ACT domains span residues Gln706–Pro784 and Ile816–Ile897.

The protein belongs to the GlnD family. Mg(2+) is required as a cofactor.

The enzyme catalyses [protein-PII]-L-tyrosine + UTP = [protein-PII]-uridylyl-L-tyrosine + diphosphate. It carries out the reaction [protein-PII]-uridylyl-L-tyrosine + H2O = [protein-PII]-L-tyrosine + UMP + H(+). Its activity is regulated as follows. Uridylyltransferase (UTase) activity is inhibited by glutamine, while glutamine activates uridylyl-removing (UR) activity. Functionally, modifies, by uridylylation and deuridylylation, the PII regulatory proteins (GlnB and homologs), in response to the nitrogen status of the cell that GlnD senses through the glutamine level. Under low glutamine levels, catalyzes the conversion of the PII proteins and UTP to PII-UMP and PPi, while under higher glutamine levels, GlnD hydrolyzes PII-UMP to PII and UMP (deuridylylation). Thus, controls uridylylation state and activity of the PII proteins, and plays an important role in the regulation of nitrogen assimilation and metabolism. This is Bifunctional uridylyltransferase/uridylyl-removing enzyme from Ectopseudomonas mendocina (strain ymp) (Pseudomonas mendocina).